The sequence spans 222 residues: Superoxide dismutase [Mn], mitochondrial (222 aa).

Residues 1–24 (MLSRAVCGTGRQLAPALGYLGSRQ) constitute a mitochondrion transit peptide. Residue His50 coordinates Mn(2+). Tyr58 is modified (3'-nitrotyrosine). N6-acetyllysine; alternate is present on residues Lys68 and Lys75. Residues Lys68 and Lys75 each carry the N6-succinyllysine; alternate modification. Residue His98 participates in Mn(2+) binding. Lys114 carries the N6-acetyllysine modification. An N6-acetyllysine; alternate mark is found at Lys122 and Lys130. An N6-succinyllysine; alternate mark is found at Lys122 and Lys130. Residues Asp183 and His187 each contribute to the Mn(2+) site. At Lys202 the chain carries N6-acetyllysine.

Belongs to the iron/manganese superoxide dismutase family. In terms of assembly, homotetramer. Requires Mn(2+) as cofactor. In terms of processing, nitrated under oxidative stress. Nitration coupled with oxidation inhibits the catalytic activity. Post-translationally, acetylation at Lys-122 decreases enzymatic activity. Deacetylated by SIRT3 upon exposure to ionizing radiations or after long fasting. Polyubiquitinated; leading to proteasomal degradation. Deubiquitinated by USP36 which increases protein stability.

The protein resides in the mitochondrion matrix. The catalysed reaction is 2 superoxide + 2 H(+) = H2O2 + O2. Destroys superoxide anion radicals which are normally produced within the cells and which are toxic to biological systems. The chain is Superoxide dismutase [Mn], mitochondrial (SOD2) from Macaca nemestrina (Pig-tailed macaque).